We begin with the raw amino-acid sequence, 275 residues long: Beta-lactamase OXA-15 (275 aa).

Positions 1 to 21 (MAIRIFAILFSIFSLATFAHA) are cleaved as a signal peptide. Ser72 acts as the Acyl-ester intermediate in catalysis. At Lys75 the chain carries N6-carboxylysine. 210-212 (KTG) serves as a coordination point for substrate.

The protein belongs to the class-D beta-lactamase family.

The catalysed reaction is a beta-lactam + H2O = a substituted beta-amino acid. Its function is as follows. Hydrolyzes oxacillin, first-generation cephalosporins and ceftazidime. Does not hydrolyze cefotaxime or carbapenems. In Pseudomonas aeruginosa, this protein is Beta-lactamase OXA-15 (bla).